The sequence spans 106 residues: UPF0145 protein Dhaf_3855 (106 aa).

It belongs to the UPF0145 family.

This Desulfitobacterium hafniense (strain DSM 10664 / DCB-2) protein is UPF0145 protein Dhaf_3855.